Here is a 328-residue protein sequence, read N- to C-terminus: ATP synthase mitochondrial F1 complex assembly factor 1 (328 aa).

Residues 1–57 constitute a mitochondrion transit peptide; it reads MAAVVVAAAGGAGPAVLQVAGLYRGLCAVRSRALGLGLVSPAQLRVFPVRPGSGRPE.

This sequence belongs to the ATP11 family. As to quaternary structure, interacts with ATP5F1B; involved in the assembly of the F1 component of the mitochondrial ATP synthase (ATPase). In terms of tissue distribution, weakly expressed in muscle.

Its subcellular location is the mitochondrion inner membrane. Has a complex stabilizing activity in the assembly of the mitochondrial F1-F0 complex. The polypeptide is ATP synthase mitochondrial F1 complex assembly factor 1 (Homo sapiens (Human)).